Reading from the N-terminus, the 512-residue chain is Envelope glycoprotein (512 aa).

The first 15 residues, 1–15, serve as a signal peptide directing secretion; the sequence is MFLQTALLLLSLGVA. Residues Asn185, Asn263, Asn289, Asn378, and Asn416 are each glycosylated (N-linked (GlcNAc...) asparagine; by host). A helical membrane pass occupies residues 479–502; sequence GQLGGLLYGNIGVYLLIAFAFVLL.

Its subcellular location is the virion membrane. In terms of biological role, attaches the virus to host cellular receptor and later induces fusion of virion with host membrane. This Thogoto virus (isolate SiAr 126) (Tho) protein is Envelope glycoprotein.